Consider the following 573-residue polypeptide: NEDD4-binding protein 3-B (573 aa).

3 disordered regions span residues 119-138, 173-220, and 384-405; these read EFSKSSLPERGHSDKSRFGP, CVGS…NSYS, and GENEELRQKQSQSDNSGPNLED. Positions 125-135 are enriched in basic and acidic residues; the sequence is LPERGHSDKSR. The segment covering 186-196 has biased composition (low complexity); sequence SNSHSNNPSES. Polar residues-rich tracts occupy residues 207–220 and 392–401; these read DSKQNSINSLNSYS and KQSQSDNSGP. Residues 287-474 adopt a coiled-coil conformation; that stretch reads ESVEDVARQL…CLQALEDVKS (188 aa).

This sequence belongs to the N4BP3 family.

The protein localises to the cytoplasmic vesicle. Its subcellular location is the cell projection. The protein resides in the axon. It is found in the dendrite. Its function is as follows. Plays a role in axon and dendrite arborization during cranial nerve development. Also important for neural crest migration and early development of other anterior structures including eye, brain and cranial cartilage. This is NEDD4-binding protein 3-B from Xenopus laevis (African clawed frog).